We begin with the raw amino-acid sequence, 188 residues long: Threonylcarbamoyl-AMP synthase (188 aa).

Residues Gln-3 to Gln-188 enclose the YrdC-like domain.

Belongs to the SUA5 family. TsaC subfamily.

It is found in the cytoplasm. The enzyme catalyses L-threonine + hydrogencarbonate + ATP = L-threonylcarbamoyladenylate + diphosphate + H2O. Its function is as follows. Required for the formation of a threonylcarbamoyl group on adenosine at position 37 (t(6)A37) in tRNAs that read codons beginning with adenine. Catalyzes the conversion of L-threonine, HCO(3)(-)/CO(2) and ATP to give threonylcarbamoyl-AMP (TC-AMP) as the acyladenylate intermediate, with the release of diphosphate. This is Threonylcarbamoyl-AMP synthase from Shewanella sp. (strain MR-4).